We begin with the raw amino-acid sequence, 159 residues long: SsrA-binding protein (159 aa).

Residues 138-159 (KRDTLKDKDWQRQKERMMKHSV) are disordered.

This sequence belongs to the SmpB family.

The protein resides in the cytoplasm. Required for rescue of stalled ribosomes mediated by trans-translation. Binds to transfer-messenger RNA (tmRNA), required for stable association of tmRNA with ribosomes. tmRNA and SmpB together mimic tRNA shape, replacing the anticodon stem-loop with SmpB. tmRNA is encoded by the ssrA gene; the 2 termini fold to resemble tRNA(Ala) and it encodes a 'tag peptide', a short internal open reading frame. During trans-translation Ala-aminoacylated tmRNA acts like a tRNA, entering the A-site of stalled ribosomes, displacing the stalled mRNA. The ribosome then switches to translate the ORF on the tmRNA; the nascent peptide is terminated with the 'tag peptide' encoded by the tmRNA and targeted for degradation. The ribosome is freed to recommence translation, which seems to be the essential function of trans-translation. In Alteromonas mediterranea (strain DSM 17117 / CIP 110805 / LMG 28347 / Deep ecotype), this protein is SsrA-binding protein.